The sequence spans 302 residues: Large ribosomal subunit protein uL29m (302 aa).

The protein belongs to the universal ribosomal protein uL29 family. Component of the mitochondrial large ribosomal subunit. Mature mitochondrial ribosomes consist of a small (37S) and a large (54S) subunit. The 37S subunit contains at least 33 different proteins and 1 molecule of RNA (15S). The 54S subunit contains at least 45 different proteins and 1 molecule of RNA (21S).

The protein localises to the mitochondrion. The sequence is that of Large ribosomal subunit protein uL29m (MRPL4) from Debaryomyces hansenii (strain ATCC 36239 / CBS 767 / BCRC 21394 / JCM 1990 / NBRC 0083 / IGC 2968) (Yeast).